Here is a 777-residue protein sequence, read N- to C-terminus: MKTYTYSKQDLSFIEQLSQAYCKDPFSYLGLHQAGDVSVIRVFLPEATTVKILSADGQILSEALKIDDSGLFVAQLSQQYSSLNYRLRVGYSLAEIDLEDPYRFTSSLLPMDNWLLAEGTHLRPYEILGAHLKTQEGVSGVHFSVWAPNARRVSVVGDFNYWDGRVNPMRFHAESGIWDIFLPNVEKGALYKFEILDSNGNIRLKSDPYAFASQFRPDTASVVTGLPEKIEVDAKLRHANDPDQPISIYEVHLGSWRRHLENNYWLNYEEIANELIPYVKDMGFTHIELLPITEYPFDGSWGYQPTGLYSPTSRFGSPDDLRTLIRKAHEAGINVILDWVVGHFPTDSHGLTEFDGSHLYEHQDPREGYHQDWNTLIFNYGRHEVFNYLSSNALYWTERFGIDGLRVDAVSSMIYRDYSRKDGEWIPNQYGGRENLEALDFLRRTNRMLKKEGHGAVVIAEESTSFAGITHSPTENGVGFDYKWNMGWMNDTLRYMSLDPIYRQYHHDWMTFGMMYQYSEKFVLPLSHDEVVHGKCSILGKMSGDCWQKFANLRAYYGYMWGYPGKKLLFMGNEFAQGREWNYNESLDWFLLGEQGGGWHKGVLNWVRDLNRTYQKYPALYQLDYDPAGFEWLVVDDWQQSVFAFERKAKNGESVIVVSNFTPVVRHNYRIGVRQDGTYTEILNSDAAYYEGSNVGNYGEIECEAIESHGKPFSIELSIPPLSTIFIACQPKPKEAVEAEQDIVKMAEVAMQKALKPTKKTVSVKAKAHKKAHKNKK.

D408 functions as the Nucleophile in the catalytic mechanism. The Proton donor role is filled by E461.

It belongs to the glycosyl hydrolase 13 family. GlgB subfamily. In terms of assembly, monomer.

The enzyme catalyses Transfers a segment of a (1-&gt;4)-alpha-D-glucan chain to a primary hydroxy group in a similar glucan chain.. The protein operates within glycan biosynthesis; glycogen biosynthesis. Its function is as follows. Catalyzes the formation of the alpha-1,6-glucosidic linkages in glycogen by scission of a 1,4-alpha-linked oligosaccharide from growing alpha-1,4-glucan chains and the subsequent attachment of the oligosaccharide to the alpha-1,6 position. In Actinobacillus pleuropneumoniae serotype 7 (strain AP76), this protein is 1,4-alpha-glucan branching enzyme GlgB.